The chain runs to 207 residues: Cytochrome c biogenesis ATP-binding export protein CcmA (207 aa).

The ABC transporter domain maps to 6-207; it reads LCAEGLECIR…RGDCRSLNLS (202 aa). 38 to 45 is an ATP binding site; the sequence is GANGAGKT.

The protein belongs to the ABC transporter superfamily. CcmA exporter (TC 3.A.1.107) family. As to quaternary structure, the complex is composed of two ATP-binding proteins (CcmA) and two transmembrane proteins (CcmB).

Its subcellular location is the cell inner membrane. It carries out the reaction heme b(in) + ATP + H2O = heme b(out) + ADP + phosphate + H(+). Part of the ABC transporter complex CcmAB involved in the biogenesis of c-type cytochromes; once thought to export heme, this seems not to be the case, but its exact role is uncertain. Responsible for energy coupling to the transport system. This is Cytochrome c biogenesis ATP-binding export protein CcmA from Methylococcus capsulatus (strain ATCC 33009 / NCIMB 11132 / Bath).